Consider the following 341-residue polypeptide: Holliday junction branch migration complex subunit RuvB (341 aa).

The tract at residues 1-180 (MAKSHTLNPE…FGIQLRLDYY (180 aa)) is large ATPase domain (RuvB-L). 9 residues coordinate ATP: leucine 19, arginine 20, glycine 61, lysine 64, threonine 65, threonine 66, arginine 170, tyrosine 180, and arginine 217. Threonine 65 contributes to the Mg(2+) binding site. The segment at 181-251 (NDEEMKEIVL…LCLKAFEKMG (71 aa)) is small ATPAse domain (RuvB-S). The tract at residues 254–341 (DLGLDGMDRQ…ENHGQDPTLF (88 aa)) is head domain (RuvB-H). Residues arginine 309 and arginine 314 each coordinate DNA.

This sequence belongs to the RuvB family. Homohexamer. Forms an RuvA(8)-RuvB(12)-Holliday junction (HJ) complex. HJ DNA is sandwiched between 2 RuvA tetramers; dsDNA enters through RuvA and exits via RuvB. An RuvB hexamer assembles on each DNA strand where it exits the tetramer. Each RuvB hexamer is contacted by two RuvA subunits (via domain III) on 2 adjacent RuvB subunits; this complex drives branch migration. In the full resolvosome a probable DNA-RuvA(4)-RuvB(12)-RuvC(2) complex forms which resolves the HJ.

It is found in the cytoplasm. It catalyses the reaction ATP + H2O = ADP + phosphate + H(+). Its function is as follows. The RuvA-RuvB-RuvC complex processes Holliday junction (HJ) DNA during genetic recombination and DNA repair, while the RuvA-RuvB complex plays an important role in the rescue of blocked DNA replication forks via replication fork reversal (RFR). RuvA specifically binds to HJ cruciform DNA, conferring on it an open structure. The RuvB hexamer acts as an ATP-dependent pump, pulling dsDNA into and through the RuvAB complex. RuvB forms 2 homohexamers on either side of HJ DNA bound by 1 or 2 RuvA tetramers; 4 subunits per hexamer contact DNA at a time. Coordinated motions by a converter formed by DNA-disengaged RuvB subunits stimulates ATP hydrolysis and nucleotide exchange. Immobilization of the converter enables RuvB to convert the ATP-contained energy into a lever motion, pulling 2 nucleotides of DNA out of the RuvA tetramer per ATP hydrolyzed, thus driving DNA branch migration. The RuvB motors rotate together with the DNA substrate, which together with the progressing nucleotide cycle form the mechanistic basis for DNA recombination by continuous HJ branch migration. Branch migration allows RuvC to scan DNA until it finds its consensus sequence, where it cleaves and resolves cruciform DNA. This chain is Holliday junction branch migration complex subunit RuvB, found in Leptospira borgpetersenii serovar Hardjo-bovis (strain JB197).